We begin with the raw amino-acid sequence, 806 residues long: Mitochondrial intermediate peptidase (806 aa).

The N-terminal 29 residues, 1-29 (MLSRHLTVLRSACRVSHDLRVPSTQAVRK), are a transit peptide targeting the mitochondrion. His581 serves as a coordination point for Zn(2+). The active site involves Glu582. Residues His585 and His588 each coordinate Zn(2+).

Belongs to the peptidase M3 family. The cofactor is Zn(2+).

The protein localises to the mitochondrion matrix. It catalyses the reaction Release of an N-terminal octapeptide as second stage of processing of some proteins imported into the mitochondrion.. In terms of biological role, cleaves proteins, imported into the mitochondrion, to their mature size. While most mitochondrial precursor proteins are processed to the mature form in one step by mitochondrial processing peptidase (MPP), the sequential cleavage by MIP of an octapeptide after initial processing by MPP is a required step for a subgroup of nuclear-encoded precursor proteins destined for the matrix or the inner membrane. This chain is Mitochondrial intermediate peptidase (OCT1), found in Malassezia globosa (strain ATCC MYA-4612 / CBS 7966) (Dandruff-associated fungus).